The chain runs to 547 residues: MSTYGTLLKVTSFGESHGKAIGCVIDGFLPNVEINFDLIQRQLNRRRPNQSKLTSNRNEPDKLIVLSGFDENKTLGTPITFLINNEDVIKKNYSSFIDIPRPGHGDYTYFKKYNVKNKSGSSRFSGRETATRVAAGACIEQWLHTFYNCTIVCYVHSVGNIKLPEQVSKDFERNPPSRDLVDAHGAVKYHQGRGTFTDFFGNVYNANGEFLRGGEAAPEGATPADGTPTDGNPTDDPLANARERLSDPGECTLLQTRCPHPLTAVKICSYILKLKKAGDSIGGVATCIAHNVPVGIGEPIFEKMEAELGKIILSIPAVKGIEFGSGFDGTYMLGSDHNDLFGTLDVPEEGPCQRGWTLTDALDSKRGEVTPGGSRAQEGTSFEKDACHRSGHLSNLSGYPSNGSGNPPNGSDHPSNRSGNPPNRSDPRVDESTRETSPPSGEKLLVTTSNNCGGILAGITTGNNIVFRSAIKPVSSIQIEKETCNFFGEKCKLKVTGMHDCCILPRLPPIIEASTSIVIGDMILRQVAKYGHSKLPSVGSLSRSTRE.

Active-site residues include histidine 17, histidine 104, and aspartate 500.

This sequence belongs to the chorismate synthase family.

Its subcellular location is the cytoplasm. The protein resides in the cytosol. The enzyme catalyses 5-O-(1-carboxyvinyl)-3-phosphoshikimate = chorismate + phosphate. It carries out the reaction FMNH2 + NADP(+) = FMN + NADPH + 2 H(+). The protein operates within metabolic intermediate biosynthesis; chorismate biosynthesis; chorismate from D-erythrose 4-phosphate and phosphoenolpyruvate: step 7/7. Its function is as follows. Bifunctional chorismate synthase and flavin reductase. Catalyzes the conversion of 5-enolpyruvylshikimate 3-phosphate (EPSP) to form chorismate. Acts also as a flavin reductase (FR) able to generate reduced flavin mononucleotide in the presence of NADPH. The polypeptide is Chorismate synthase (Plasmodium vivax (strain Salvador I)).